A 263-amino-acid chain; its full sequence is Hydroxyethylthiazole kinase 1 (263 aa).

Residue M42 participates in substrate binding. The ATP site is built by K118 and T164. G191 lines the substrate pocket.

It belongs to the Thz kinase family. Mg(2+) serves as cofactor.

It catalyses the reaction 5-(2-hydroxyethyl)-4-methylthiazole + ATP = 4-methyl-5-(2-phosphooxyethyl)-thiazole + ADP + H(+). It participates in cofactor biosynthesis; thiamine diphosphate biosynthesis; 4-methyl-5-(2-phosphoethyl)-thiazole from 5-(2-hydroxyethyl)-4-methylthiazole: step 1/1. Catalyzes the phosphorylation of the hydroxyl group of 4-methyl-5-beta-hydroxyethylthiazole (THZ). This chain is Hydroxyethylthiazole kinase 1, found in Clostridium botulinum (strain Langeland / NCTC 10281 / Type F).